Consider the following 94-residue polypeptide: Viral macrophage inflammatory protein 2 (94 aa).

The signal sequence occupies residues M1–S20. Intrachain disulfides connect C34/C58 and C35/C74.

This sequence belongs to the intercrine beta (chemokine CC) family. As to quaternary structure, monomer. Interacts with human chemokine receptor CXCR4.

Its subcellular location is the secreted. In terms of biological role, blocks infection by several different human immunodeficiency virus type 1 (HIV-1) strains. This occurs because vMIP-II binds to a wide range of chemokine receptors. May form part of the response to host defenses contributing to virus-induced neoplasia and may have relevance to KSHV and HIV-I interactions. The protein is Viral macrophage inflammatory protein 2 (ORF K4) of Human herpesvirus 8 type P (isolate GK18) (HHV-8).